Here is a 690-residue protein sequence, read N- to C-terminus: DNA-directed RNA polymerase subunit beta' (690 aa).

Cys76, Cys78, Cys94, and Cys97 together coordinate Zn(2+). Mg(2+) is bound by residues Asp496, Asp498, and Asp500.

Belongs to the RNA polymerase beta' chain family. RpoC1 subfamily. In terms of assembly, in plastids the minimal PEP RNA polymerase catalytic core is composed of four subunits: alpha, beta, beta', and beta''. When a (nuclear-encoded) sigma factor is associated with the core the holoenzyme is formed, which can initiate transcription. Requires Mg(2+) as cofactor. It depends on Zn(2+) as a cofactor.

The protein resides in the plastid. The protein localises to the chloroplast. The enzyme catalyses RNA(n) + a ribonucleoside 5'-triphosphate = RNA(n+1) + diphosphate. Its function is as follows. DNA-dependent RNA polymerase catalyzes the transcription of DNA into RNA using the four ribonucleoside triphosphates as substrates. In Lemna minor (Common duckweed), this protein is DNA-directed RNA polymerase subunit beta'.